Here is a 512-residue protein sequence, read N- to C-terminus: Cytochrome P450 26B1 (512 aa).

C441 lines the heme pocket.

This sequence belongs to the cytochrome P450 family. It depends on heme as a cofactor.

The protein localises to the endoplasmic reticulum membrane. It localises to the microsome membrane. It catalyses the reaction all-trans-retinoate + reduced [NADPH--hemoprotein reductase] + O2 = all-trans-4-hydroxyretinoate + oxidized [NADPH--hemoprotein reductase] + H2O + H(+). The catalysed reaction is all-trans-retinoate + reduced [NADPH--hemoprotein reductase] + O2 = all-trans-18-hydroxyretinoate + oxidized [NADPH--hemoprotein reductase] + H2O + H(+). Its function is as follows. A cytochrome P450 monooxygenase involved in the metabolism of retinoates (RAs), the active metabolites of vitamin A, and critical signaling molecules in animals. RAs exist as at least four different isomers: all-trans-RA (atRA), 9-cis-RA, 13-cis-RA, and 9,13-dicis-RA, where atRA is considered to be the biologically active isomer, although 9-cis-RA and 13-cis-RA also have activity. Catalyzes the hydroxylation of atRA primarily at C-4 and C-18, thereby contributing to the regulation of atRA homeostasis and signaling. Hydroxylation of atRA limits its biological activity and initiates a degradative process leading to its eventual elimination. Involved in the convertion of atRA to all-trans-4-oxo-RA. Can oxidize all-trans-13,14-dihydroretinoate (DRA) to metabolites which could include all-trans-4-oxo-DRA, all-trans-4-hydroxy-DRA, all-trans-5,8-epoxy-DRA, and all-trans-18-hydroxy-DRA. Shows preference for the following substrates: atRA &gt; 9-cis-RA &gt; 13-cis-RA. Plays a central role in germ cell development: acts by degrading RAs in the developing testis, preventing STRA8 expression, thereby leading to delay of meiosis. Required for the maintenance of the undifferentiated state of male germ cells during embryonic development in Sertoli cells, inducing arrest in G0 phase of the cell cycle and preventing meiotic entry. Plays a role in skeletal development, both at the level of patterning and in the ossification of bone and the establishment of some synovial joints. Essential for postnatal survival. Also has a significant activity in oxidation of tazarotenic acid and may therefore metabolize that xenobiotic in vivo. In Mus musculus (Mouse), this protein is Cytochrome P450 26B1 (Cyp26b1).